A 204-amino-acid chain; its full sequence is Large ribosomal subunit protein eL15 (204 aa).

It belongs to the eukaryotic ribosomal protein eL15 family. As to quaternary structure, component of the large ribosomal subunit.

The protein localises to the cytoplasm. Its function is as follows. Component of the large ribosomal subunit. The ribosome is a large ribonucleoprotein complex responsible for the synthesis of proteins in the cell. The sequence is that of Large ribosomal subunit protein eL15 (rpl15) from Hypophthalmichthys molitrix (Silver carp).